Reading from the N-terminus, the 492-residue chain is GMP reductase (492 aa).

Residues 30–31 and Arg78 each bind NADP(+); that span reads SR. CBS domains lie at 99-162 and 164-223; these read LIED…LVET and MTPV…LNAT. Residues 260-262 and 313-314 each bind NADP(+); these read DIA and VG. Residues Gly314, Gly316, and Cys319 each contribute to the K(+) site. The Thioimidate intermediate role is filled by Cys319. The Proton donor/acceptor role is filled by Thr321. Arg322 serves as a coordination point for K(+). GMP is bound by residues 352 to 354, 375 to 376, and 401 to 403; these read DGG, GN, and GMA. NADP(+) is bound by residues Met402 and 454–457; that span reads SGIS. A Microbody targeting signal motif is present at residues 490-492; the sequence is SKL.

It belongs to the IMPDH/GMPR family. GuaC type 1 subfamily. As to quaternary structure, homotetramer.

It localises to the glycosome. The catalysed reaction is IMP + NH4(+) + NADP(+) = GMP + NADPH + 2 H(+). With respect to regulation, activated by GTP and inhibited by ATP and IMP. Mycophenolic acid (MPA) is a competitive inhibitor of the enzyme with respect to NADPH. Catalyzes the irreversible NADPH-dependent deamination of GMP to IMP. It functions in the conversion of nucleobase, nucleoside and nucleotide derivatives of G to A nucleotides, and in maintaining the intracellular balance of A and G nucleotides. In Leishmania major, this protein is GMP reductase.